The primary structure comprises 279 residues: Large ribosomal subunit protein uL24m (279 aa).

The N-terminal 31 residues, 1-31 (MRDLRKLIPRLRGPGTNVLKMKKPLPLHMRT), are a transit peptide targeting the mitochondrion. A compositionally biased stretch (basic and acidic residues) spans 34 to 51 (REHLNKSDPTVKDDKSAK). The interval 34-56 (REHLNKSDPTVKDDKSAKPELPF) is disordered. In terms of domain architecture, KOW spans 70–100 (KGDYVYVHQGPLKGKWGRVVETNKYTNGITI). Residues 185–204 (PRPKTEDKPKDPEGKLDTKN) form a disordered region. The span at 187-202 (PKTEDKPKDPEGKLDT) shows a compositional bias: basic and acidic residues.

The protein belongs to the universal ribosomal protein uL24 family. As to quaternary structure, component of the mitochondrial large ribosomal subunit (mt-LSU). Mature yeast 74S mitochondrial ribosomes consist of a small (37S) and a large (54S) subunit. The 37S small subunit contains a 15S ribosomal RNA (15S mt-rRNA) and at least 32 different proteins. The 54S large subunit contains a 21S rRNA (21S mt-rRNA) and at least 45 different proteins. uL24m forms the wall of the exit tunnel.

It is found in the mitochondrion. Functionally, component of the mitochondrial ribosome (mitoribosome), a dedicated translation machinery responsible for the synthesis of mitochondrial genome-encoded proteins, including at least some of the essential transmembrane subunits of the mitochondrial respiratory chain. The mitoribosomes are attached to the mitochondrial inner membrane and translation products are cotranslationally integrated into the membrane. The sequence is that of Large ribosomal subunit protein uL24m (mrpl40) from Schizosaccharomyces pombe (strain 972 / ATCC 24843) (Fission yeast).